A 90-amino-acid chain; its full sequence is U7-theraphotoxin-Hhn1a 7 (90 aa).

Residues 1 to 19 (MKTAIFTVVLALAVFAVLS) form the signal peptide. Positions 20–50 (FGWEANEKALSEGFTELIHEKEAASETEARE) are excised as a propeptide. 3 disulfide bridges follow: cysteine 51/cysteine 65, cysteine 58/cysteine 70, and cysteine 64/cysteine 81.

Belongs to the neurotoxin 10 (Hwtx-1) family. 13 (Hntx-13) subfamily. In terms of tissue distribution, expressed by the venom gland.

It localises to the secreted. Its function is as follows. Ion channel inhibitor. The protein is U7-theraphotoxin-Hhn1a 7 of Cyriopagopus hainanus (Chinese bird spider).